A 291-amino-acid polypeptide reads, in one-letter code: Ribosomal RNA small subunit methyltransferase A (291 aa).

The S-adenosyl-L-methionine site is built by Asn29, Leu31, Gly56, Glu77, Asp102, and Asn127.

This sequence belongs to the class I-like SAM-binding methyltransferase superfamily. rRNA adenine N(6)-methyltransferase family. RsmA subfamily.

Its subcellular location is the cytoplasm. It carries out the reaction adenosine(1518)/adenosine(1519) in 16S rRNA + 4 S-adenosyl-L-methionine = N(6)-dimethyladenosine(1518)/N(6)-dimethyladenosine(1519) in 16S rRNA + 4 S-adenosyl-L-homocysteine + 4 H(+). In terms of biological role, specifically dimethylates two adjacent adenosines (A1518 and A1519) in the loop of a conserved hairpin near the 3'-end of 16S rRNA in the 30S particle. May play a critical role in biogenesis of 30S subunits. The sequence is that of Ribosomal RNA small subunit methyltransferase A from Geobacillus sp. (strain WCH70).